Reading from the N-terminus, the 121-residue chain is MRHYEIVLLIHPDQSEQVPAMLERYKGMITAGGGTVHRVEDWGRRQLVYLIQKLAKAHYLCINIEASQAVMEEIEHAFKFNDAVLRHLTVVKKKAETGPSLMMRNVEREEARKTQQQEFAA.

The disordered stretch occupies residues 99–121 (PSLMMRNVEREEARKTQQQEFAA). Residues 105–115 (NVEREEARKTQ) show a composition bias toward basic and acidic residues.

It belongs to the bacterial ribosomal protein bS6 family.

Binds together with bS18 to 16S ribosomal RNA. The chain is Small ribosomal subunit protein bS6 from Polaromonas naphthalenivorans (strain CJ2).